The following is a 427-amino-acid chain: Adenylosuccinate synthetase (427 aa).

GTP contacts are provided by residues 12-18 (GDEGKGK) and 40-42 (GHT). Catalysis depends on D13, which acts as the Proton acceptor. Mg(2+) is bound by residues D13 and G40. IMP contacts are provided by residues 13–16 (DEGK), 38–41 (NAGH), T128, R142, Q223, T238, and R302. H41 (proton donor) is an active-site residue. Residue 298–304 (TTTGRPR) coordinates substrate. GTP contacts are provided by residues R304, 330–332 (SID), and 412–414 (SVG).

It belongs to the adenylosuccinate synthetase family. In terms of assembly, homodimer. Mg(2+) is required as a cofactor.

The protein resides in the cytoplasm. The catalysed reaction is IMP + L-aspartate + GTP = N(6)-(1,2-dicarboxyethyl)-AMP + GDP + phosphate + 2 H(+). Its pathway is purine metabolism; AMP biosynthesis via de novo pathway; AMP from IMP: step 1/2. Functionally, plays an important role in the de novo pathway of purine nucleotide biosynthesis. Catalyzes the first committed step in the biosynthesis of AMP from IMP. This is Adenylosuccinate synthetase from Staphylococcus epidermidis (strain ATCC 35984 / DSM 28319 / BCRC 17069 / CCUG 31568 / BM 3577 / RP62A).